Consider the following 304-residue polypeptide: MTNHKENEMSKSELLVVTGLSGAGKSVVIQCLEDIGYFCVDNLPPILLPKFVELMEQGNPSLQKVAIAIDLRGKELFKSLVEEIDAIKSRNDVIVDVMFLEAETEKLISRYKESRRAHPLNENGQMSLMDSILEEKQLLSNIRTIANYIVDTTQLTTKELKARVKEKFEDENFKSFSINVSSFGFKHGIQKDADLVFDVRFLPNPYYVEDLRPMTGEDEPVYHYVMKWKETEIFFEKLMDLLKFMIPGYKKEGKSQLVIAIGCTGGQHRSVALAKRIGEELTEIFDYNVYVHHRDAHIESGVRK.

Residue 19–26 (GLSGAGKS) coordinates ATP. 70–73 (DLRG) is a GTP binding site.

Belongs to the RapZ-like family.

Functionally, displays ATPase and GTPase activities. This chain is Nucleotide-binding protein SH2124, found in Staphylococcus haemolyticus (strain JCSC1435).